Here is a 182-residue protein sequence, read N- to C-terminus: NADH-quinone oxidoreductase subunit I (182 aa).

4Fe-4S ferredoxin-type domains lie at 52–82 (LTRDPDGEERCVACNLCAVACPVGCISLQKA) and 92–121 (DFFRINFSRCIFCGLCEEACPTTAIQLTPD). [4Fe-4S] cluster-binding residues include Cys-62, Cys-65, Cys-68, Cys-72, Cys-101, Cys-104, Cys-107, and Cys-111.

This sequence belongs to the complex I 23 kDa subunit family. NDH-1 is composed of 13 different subunits. Subunits NuoA, H, J, K, L, M, N constitute the membrane sector of the complex. Requires [4Fe-4S] cluster as cofactor.

Its subcellular location is the cell inner membrane. The catalysed reaction is a quinone + NADH + 5 H(+)(in) = a quinol + NAD(+) + 4 H(+)(out). NDH-1 shuttles electrons from NADH, via FMN and iron-sulfur (Fe-S) centers, to quinones in the respiratory chain. The immediate electron acceptor for the enzyme in this species is believed to be ubiquinone. Couples the redox reaction to proton translocation (for every two electrons transferred, four hydrogen ions are translocated across the cytoplasmic membrane), and thus conserves the redox energy in a proton gradient. This is NADH-quinone oxidoreductase subunit I from Pseudomonas syringae pv. syringae (strain B728a).